We begin with the raw amino-acid sequence, 157 residues long: uncharacterized protein (157 aa).

The 138-residue stretch at 9-146 (LLINYKTLDE…GDFYVWHPET (138 aa)) folds into the N-acetyltransferase domain.

This is an uncharacterized protein from Bacillus cereus (strain ATCC 10987 / NRS 248).